The sequence spans 162 residues: Peroxiredoxin-2B (162 aa).

Residues 4 to 162 (IAVGDVVPDG…SSADDILKAL (159 aa)) form the Thioredoxin domain. Residue C51 is the Cysteine sulfenic acid (-SOH) intermediate of the active site.

The protein belongs to the peroxiredoxin family. Prx5 subfamily. In terms of assembly, monomer. Expressed in all tissues but mostly in reproductive tissues such as buds, flowers, siliques and seeds.

The protein localises to the cytoplasm. It carries out the reaction [glutaredoxin]-dithiol + a hydroperoxide = [glutaredoxin]-disulfide + an alcohol + H2O. Reduces hydrogen peroxide and alkyl hydroperoxides with reducing equivalents provided through the thioredoxin or glutaredoxin system. May be involved in intracellular redox signaling. Its function is as follows. Thiol-specific peroxidase that catalyzes the reduction of hydrogen peroxide and organic hydroperoxides to water and alcohols, respectively. Plays a role in cell protection against oxidative stress by detoxifying peroxides and as sensor of hydrogen peroxide-mediated signaling events. The sequence is that of Peroxiredoxin-2B (PRXIIB) from Arabidopsis thaliana (Mouse-ear cress).